We begin with the raw amino-acid sequence, 581 residues long: DNA primase (581 aa).

Residues 40–64 form a CHC2-type zinc finger; sequence CPFHNEKTPSFTVNGEKQFYHCFGC. In terms of domain architecture, Toprim spans 259–341; that stretch reads QRLLVVEGYM…GRQVRFMFLP (83 aa). E265, D309, and D311 together coordinate Mg(2+).

It belongs to the DnaG primase family. Monomer. Interacts with DnaB. It depends on Zn(2+) as a cofactor. The cofactor is Mg(2+).

The enzyme catalyses ssDNA + n NTP = ssDNA/pppN(pN)n-1 hybrid + (n-1) diphosphate.. Its function is as follows. RNA polymerase that catalyzes the synthesis of short RNA molecules used as primers for DNA polymerase during DNA replication. The polypeptide is DNA primase (Salmonella typhimurium (strain LT2 / SGSC1412 / ATCC 700720)).